The sequence spans 73 residues: Large ribosomal subunit protein bL28 (73 aa).

The protein belongs to the bacterial ribosomal protein bL28 family.

This is Large ribosomal subunit protein bL28 from Buchnera aphidicola subsp. Cinara cedri (strain Cc).